Consider the following 259-residue polypeptide: tRNA (guanine-N(1)-)-methyltransferase (259 aa).

S-adenosyl-L-methionine-binding positions include G113 and I133–L138.

It belongs to the RNA methyltransferase TrmD family. In terms of assembly, homodimer.

It is found in the cytoplasm. The enzyme catalyses guanosine(37) in tRNA + S-adenosyl-L-methionine = N(1)-methylguanosine(37) in tRNA + S-adenosyl-L-homocysteine + H(+). In terms of biological role, specifically methylates guanosine-37 in various tRNAs. The chain is tRNA (guanine-N(1)-)-methyltransferase from Xanthomonas oryzae pv. oryzae (strain MAFF 311018).